A 318-amino-acid polypeptide reads, in one-letter code: Pheromone-regulated membrane protein 5 (318 aa).

Residues 78–98 (FIVVGGIAGVIFLAILLWWVI) form a helical membrane-spanning segment. Ser-129 carries the post-translational modification Phosphoserine. Over residues 238 to 247 (TISSSSASSL) the composition is skewed to low complexity. The tract at residues 238–318 (TISSSSASSL…HMLEGKEQDE (81 aa)) is disordered. Residues 250 to 261 (GNEKEVGEDIRK) show a composition bias toward basic and acidic residues. Residues 276–285 (SPESDGSVNR) show a composition bias toward polar residues. Phosphoserine is present on residues Ser-279, Ser-282, and Ser-288. The segment covering 309 to 318 (HMLEGKEQDE) has biased composition (basic and acidic residues). A Glycyl lysine isopeptide (Lys-Gly) (interchain with G-Cter in ubiquitin) cross-link involves residue Lys-314.

Belongs to the PRM5 family.

The protein resides in the membrane. This Saccharomyces cerevisiae (strain Lalvin EC1118 / Prise de mousse) (Baker's yeast) protein is Pheromone-regulated membrane protein 5 (PRM5).